The chain runs to 448 residues: Beta-alanine--pyruvate aminotransferase (448 aa).

W61 serves as a coordination point for substrate. Residue 120–121 coordinates pyridoxal 5'-phosphate; it reads GS. K288 carries the post-translational modification N6-(pyridoxal phosphate)lysine. Position 327 (T327) interacts with pyridoxal 5'-phosphate. Residues R414 and Q421 each contribute to the substrate site.

Belongs to the class-III pyridoxal-phosphate-dependent aminotransferase family. Homotetramer. Pyridoxal 5'-phosphate serves as cofactor.

The catalysed reaction is 3-oxopropanoate + L-alanine = beta-alanine + pyruvate. With respect to regulation, inhibited by gabaculine (5-amino-1,3-cyclohexadienylcarboxylic acid). In terms of biological role, involved in the degradation of beta-alanine. Catalyzes the transfer of the amino group from beta-alanine to pyruvate to yield L-alanine and 3-oxopropanoate. It can also accept both 4-aminobutyrate and (S)-alpha-methylbenzylamine (MBA) as amino-group donors in the presence of pyruvate as an amine acceptor. This Pseudomonas aeruginosa (strain ATCC 15692 / DSM 22644 / CIP 104116 / JCM 14847 / LMG 12228 / 1C / PRS 101 / PAO1) protein is Beta-alanine--pyruvate aminotransferase (bauA).